The chain runs to 67 residues: MDIIDIRSKTNDELHELLFNLRKELIDVILTKKLDKSHNHFYGSNIKKDIARILTVLSERKNEVKNV.

This sequence belongs to the universal ribosomal protein uL29 family.

The chain is Large ribosomal subunit protein uL29 from Ehrlichia ruminantium (strain Gardel).